The chain runs to 733 residues: MFKTHKIEIEWAGRPLTLETGKIARQADGAVIATYGETIVLATVVSAKSPKPDQDFFPLTVNYQEKSYAVGRIPGGYLKRESRPSENETLISRLIDRPIRPLFADGYKNDTQVIVSVIQHDLENNPDILAMIASSAALTLSGVPFMGPIAGARVGYCNGQYILNPHIDEMSESKLDLVVAGTENAVLMVESEAQELPEDIMLGAVMFGHKGLQPILDAIIKLAEVAAKDPRDFVPEDLSDLETAMLEMAEKDIRKAYTITDKQERYAALDALKTEIINKFMPETEEDCKFSVDQIATVFKQLQAKIVRSNILDTKKRIDGRDLSTVRPIQSEVGILPRTHGSALFTRGETQAIVVATLGTGEDEQYIDSLTGMYKETFLLHYNFPPFSVGETGRLGSPGRREIGHGKLAWRAIHPMLPSKESFPYTIRAVSEITESNGSSSMATVCGTSLALMDAGVPLARPVAGIAMGLIKEGERFAVLSDILGDEDHLGDMDFKVAGTANGITALQMDIKIDGITEEIMKIALEQAKGGRIHILNEMAKALTSARAELSEFSPRIEVMNIAVDKIRDVIGTGGKVIREIVEQTGAKINIEDDGTIRIASADAKTIEAAKRWIHSIVDEPEVGVIYQGTVVKTAEFGAFVNFFGSRDGLVHISQLTTERVTKTTDVVKEGDKVWVKLMGFDERGKVRLSMKIVDQKTGKEIIGEDSIKAEQEKYTEETHKSENKRRRKKKEE.

Mg(2+) is bound by residues aspartate 488 and aspartate 494. Positions 555–614 constitute a KH domain; sequence PRIEVMNIAVDKIRDVIGTGGKVIREIVEQTGAKINIEDDGTIRIASADAKTIEAAKRWI. In terms of domain architecture, S1 motif spans 624–692; the sequence is GVIYQGTVVK…ERGKVRLSMK (69 aa). A compositionally biased stretch (basic and acidic residues) spans 711-722; it reads EQEKYTEETHKS. Residues 711 to 733 form a disordered region; sequence EQEKYTEETHKSENKRRRKKKEE. Residues 723-733 are compositionally biased toward basic residues; it reads ENKRRRKKKEE.

Belongs to the polyribonucleotide nucleotidyltransferase family. It depends on Mg(2+) as a cofactor.

Its subcellular location is the cytoplasm. It carries out the reaction RNA(n+1) + phosphate = RNA(n) + a ribonucleoside 5'-diphosphate. In terms of biological role, involved in mRNA degradation. Catalyzes the phosphorolysis of single-stranded polyribonucleotides processively in the 3'- to 5'-direction. This chain is Polyribonucleotide nucleotidyltransferase, found in Bartonella henselae (strain ATCC 49882 / DSM 28221 / CCUG 30454 / Houston 1) (Rochalimaea henselae).